The chain runs to 212 residues: Imidazole glycerol phosphate synthase subunit HisH (212 aa).

Residues 2-212 form the Glutamine amidotransferase type-1 domain; that stretch reads LTAIIDYESG…MIGNFLTWTP (211 aa). The active-site Nucleophile is the cysteine 87. Residues histidine 192 and glutamate 194 contribute to the active site.

Heterodimer of HisH and HisF.

It is found in the cytoplasm. It catalyses the reaction 5-[(5-phospho-1-deoxy-D-ribulos-1-ylimino)methylamino]-1-(5-phospho-beta-D-ribosyl)imidazole-4-carboxamide + L-glutamine = D-erythro-1-(imidazol-4-yl)glycerol 3-phosphate + 5-amino-1-(5-phospho-beta-D-ribosyl)imidazole-4-carboxamide + L-glutamate + H(+). The catalysed reaction is L-glutamine + H2O = L-glutamate + NH4(+). The protein operates within amino-acid biosynthesis; L-histidine biosynthesis; L-histidine from 5-phospho-alpha-D-ribose 1-diphosphate: step 5/9. IGPS catalyzes the conversion of PRFAR and glutamine to IGP, AICAR and glutamate. The HisH subunit catalyzes the hydrolysis of glutamine to glutamate and ammonia as part of the synthesis of IGP and AICAR. The resulting ammonia molecule is channeled to the active site of HisF. The sequence is that of Imidazole glycerol phosphate synthase subunit HisH from Ruegeria pomeroyi (strain ATCC 700808 / DSM 15171 / DSS-3) (Silicibacter pomeroyi).